A 97-amino-acid polypeptide reads, in one-letter code: Aspartyl/glutamyl-tRNA(Asn/Gln) amidotransferase subunit C (97 aa).

The segment at 68–97 (ETGFTQEEALSNAPQQSQGQFRTPKVVESA) is disordered. The segment covering 70–88 (GFTQEEALSNAPQQSQGQF) has biased composition (polar residues).

This sequence belongs to the GatC family. As to quaternary structure, heterotrimer of A, B and C subunits.

It catalyses the reaction L-glutamyl-tRNA(Gln) + L-glutamine + ATP + H2O = L-glutaminyl-tRNA(Gln) + L-glutamate + ADP + phosphate + H(+). The catalysed reaction is L-aspartyl-tRNA(Asn) + L-glutamine + ATP + H2O = L-asparaginyl-tRNA(Asn) + L-glutamate + ADP + phosphate + 2 H(+). Allows the formation of correctly charged Asn-tRNA(Asn) or Gln-tRNA(Gln) through the transamidation of misacylated Asp-tRNA(Asn) or Glu-tRNA(Gln) in organisms which lack either or both of asparaginyl-tRNA or glutaminyl-tRNA synthetases. The reaction takes place in the presence of glutamine and ATP through an activated phospho-Asp-tRNA(Asn) or phospho-Glu-tRNA(Gln). This Akkermansia muciniphila (strain ATCC BAA-835 / DSM 22959 / JCM 33894 / BCRC 81048 / CCUG 64013 / CIP 107961 / Muc) protein is Aspartyl/glutamyl-tRNA(Asn/Gln) amidotransferase subunit C.